The chain runs to 531 residues: CTP synthase (531 aa).

Residues 1–265 (MAKYIFITGG…DRIITERLNL (265 aa)) form an amidoligase domain region. Ser13 provides a ligand contact to CTP. Ser13 provides a ligand contact to UTP. 14–19 (SLGKGI) provides a ligand contact to ATP. Residue Tyr54 participates in L-glutamine binding. Residue Asp71 coordinates ATP. Residues Asp71 and Glu139 each coordinate Mg(2+). CTP-binding positions include 146–148 (DIE), 186–191 (KTKPTQ), and Lys222. UTP-binding positions include 186–191 (KTKPTQ) and Lys222. Residues 290–529 (NVALVGKYVE…IRACLEYKRK (240 aa)) enclose the Glutamine amidotransferase type-1 domain. Residue Gly349 coordinates L-glutamine. Cys376 serves as the catalytic Nucleophile; for glutamine hydrolysis. Residues 377 to 380 (LGMQ), Glu400, and Arg457 contribute to the L-glutamine site. Residues His502 and Glu504 contribute to the active site.

This sequence belongs to the CTP synthase family. Homotetramer.

It carries out the reaction UTP + L-glutamine + ATP + H2O = CTP + L-glutamate + ADP + phosphate + 2 H(+). The catalysed reaction is L-glutamine + H2O = L-glutamate + NH4(+). It catalyses the reaction UTP + NH4(+) + ATP = CTP + ADP + phosphate + 2 H(+). The protein operates within pyrimidine metabolism; CTP biosynthesis via de novo pathway; CTP from UDP: step 2/2. Its activity is regulated as follows. Allosterically activated by GTP, when glutamine is the substrate; GTP has no effect on the reaction when ammonia is the substrate. The allosteric effector GTP functions by stabilizing the protein conformation that binds the tetrahedral intermediate(s) formed during glutamine hydrolysis. Inhibited by the product CTP, via allosteric rather than competitive inhibition. Catalyzes the ATP-dependent amination of UTP to CTP with either L-glutamine or ammonia as the source of nitrogen. Regulates intracellular CTP levels through interactions with the four ribonucleotide triphosphates. The protein is CTP synthase of Aquifex aeolicus (strain VF5).